The following is a 161-amino-acid chain: Nucleotide-binding protein XOO0647 (161 aa).

This sequence belongs to the YajQ family.

In terms of biological role, nucleotide-binding protein. The polypeptide is Nucleotide-binding protein XOO0647 (Xanthomonas oryzae pv. oryzae (strain MAFF 311018)).